Here is a 990-residue protein sequence, read N- to C-terminus: Fibronectin-binding protein A (990 aa).

A signal peptide spans 1–35 (MKNNLRYGIRKHKLGAASVFLGTMIVVGMGQDKEA). The YSIRK-G/S signaling motif motif lies at 7–18 (YGIRKHKLGAAS). Disordered regions lie at residues 33 to 61 (KEAATSEQKTTTVEENGNSATDNKVSETQ) and 96 to 193 (PKAV…TEVK). A compositionally biased stretch (polar residues) spans 37-55 (TSEQKTTTVEENGNSATDN). Residues 37–511 (TSEQKTTTVE…SNKADGNGKN (475 aa)) are ligand-binding A region. Composition is skewed to basic and acidic residues over residues 112 to 126 (TVKEEVVKEEEKPQV) and 179 to 193 (DVAEAKEASDVTEVK). The segment at 194 to 511 (GTDVTSKVTV…SNKADGNGKN (318 aa)) is fibrinogen/elastin/tropoelastin-binding. Residues 512 to 834 (GQIIQNNDFE…EGQQTIEEDT (323 aa)) form a fibronectin-binding region. Residues 545 to 574 (ENQDNTPLDIDYHTAIDGEGGYADGYIETI) form a B-1 repeat. Positions 545-604 (ENQDNTPLDIDYHTAIDGEGGYADGYIETIEETDSSAIDIDYHTAVDSEAGHVGGYTESS) are 2 X approximate tandem repeats. The stretch at 575–604 (EETDSSAIDIDYHTAVDSEAGHVGGYTESS) is one B-2 repeat. A disordered region spans residues 702-969 (LGYEGGQNSG…EESTNKGMLF (268 aa)). The stretch at 707–744 (GQNSGNQSFEEDTEEDKPKYEQGGNIVDIDFDSVPQIQ) is one D-1 repeat. A 4 X approximate tandem repeats region spans residues 707-850 (GQNSGNQSFE…TPEVPSEPET (144 aa)). Polar residues predominate over residues 741 to 752 (PQIQGQNNGNQS). One copy of the D-2 repeat lies at 745–782 (GQNNGNQSFEEDTEKDKPKYEQGGNIIDIDFDSVPQIH). The stretch at 783–821 (GFNKHNEIIEEDTNKDKPNYQFGGHNSVDFEEDTLPKVS) is one D-3 repeat. Positions 786–800 (KHNEIIEEDTNKDKP) are enriched in basic and acidic residues. Residues 822-850 (GQNEGQQTIEEDTTPPTPPTPEVPSEPET) form a D-4; truncated repeat. Pro residues predominate over residues 836–910 (PPTPPTPEVP…PAEPGKPVPP (75 aa)). WR repeat units lie at residues 851–864 (PTPPTPEVPSEPET), 865–878 (PTPPTPEVPSEPET), 879–892 (PTPPTPEVPSEPET), 893–906 (PTPPTPEVPAEPGK), and 907–920 (PVPPAEEEPKKPSK). The segment at 851-920 (PTPPTPEVPS…AEEEPKKPSK (70 aa)) is 5 X tandem repeats, Pro-rich (WR). The short motif at 954–958 (LPETG) is the LPXTG sorting signal element. A Pentaglycyl murein peptidoglycan amidated threonine modification is found at Thr957. Residues 958 to 990 (GGEESTNKGMLFGGLFSILGLALLRRNKKNHKA) constitute a propeptide, removed by sortase.

The protein resides in the secreted. It is found in the cell wall. In terms of biological role, promotes bacterial attachment to multiple substrates, such as fibronectin (Fn), fibrinogen (Fg), elastin peptides and tropoelastin. This confers to S.aureus the ability to invade endothelial cells. Promotes adherence to and aggregation of activated platelets. The protein is Fibronectin-binding protein A (fnbA) of Staphylococcus aureus (strain bovine RF122 / ET3-1).